The following is a 139-amino-acid chain: Plastocyanin (139 aa).

An N-terminal signal peptide occupies residues 1–34; the sequence is MKLIAQISRSLSLALFALVLMVGSFVAVMSPAAA. The Plastocyanin-like domain maps to 35-139; the sequence is ETFTVKMGAD…GMVGKITVEG (105 aa). Residues histidine 73, cysteine 123, histidine 126, and methionine 131 each contribute to the Cu cation site.

Belongs to the plastocyanin family. Requires Cu(2+) as cofactor.

It is found in the cellular thylakoid membrane. In terms of biological role, participates in electron transfer between P700 and the cytochrome b6-f complex in photosystem I. This is Plastocyanin (petE) from Leptolyngbya laminosa (Phormidium laminosum).